The primary structure comprises 490 residues: Cytochrome P450 2C25 (490 aa).

Cys-435 contacts heme.

This sequence belongs to the cytochrome P450 family. Requires heme as cofactor.

It localises to the endoplasmic reticulum membrane. It is found in the microsome membrane. It catalyses the reaction an organic molecule + reduced [NADPH--hemoprotein reductase] + O2 = an alcohol + oxidized [NADPH--hemoprotein reductase] + H2O + H(+). Catalyzes the hydroxylation of tolbutamide and the N-demethylation of aminopyrine and benzphetamine. Also has testosterone hydroxylase (16 beta) activity. The polypeptide is Cytochrome P450 2C25 (CYP2C25) (Mesocricetus auratus (Golden hamster)).